The sequence spans 128 residues: Leucine-rich single-pass membrane protein 1 (128 aa).

S24 is subject to Phosphoserine. The helical transmembrane segment at 65-85 (VGLIIVLIISLALVSFVIFLI) threads the bilayer. The stretch at 87–111 (QTENKMEDVSRRLAAEGKDIDDLKK) forms a coiled coil.

The protein resides in the membrane. The chain is Leucine-rich single-pass membrane protein 1 (LSMEM1) from Bos taurus (Bovine).